The sequence spans 291 residues: G1/S-specific cyclin-D1 (291 aa).

Residue Thr-282 is modified to Phosphothreonine.

This sequence belongs to the cyclin family. Cyclin D subfamily. As to quaternary structure, interacts with the CDK4 and CDK6 protein kinases to form a serine/threonine kinase holoenzyme complex. The cyclin subunit imparts substrate specificity to the complex. Post-translationally, phosphorylation at Thr-282 by MAP kinases is required for ubiquitination and degradation by the DCX(AMBRA1) complex. In terms of processing, ubiquitinated by the DCX(AMBRA1) complex during the transition from G1 to S cell phase, leading to its degradation. The DCX(AMBRA1) complex represents the major regulator of CCND1 stability during the G1/S transition.

The protein resides in the nucleus. It localises to the cytoplasm. Regulatory component of the cyclin D1-CDK4 (DC) complex that phosphorylates and inhibits members of the retinoblastoma (RB) protein family including RB1 and regulates the cell-cycle during G(1)/S transition. Phosphorylation of RB1 allows dissociation of the transcription factor E2F from the RB/E2F complex and the subsequent transcription of E2F target genes which are responsible for the progression through the G(1) phase. Hypophosphorylates RB1 in early G(1) phase. Cyclin D-CDK4 complexes are major integrators of various mitogenenic and antimitogenic signals. The polypeptide is G1/S-specific cyclin-D1 (ccnd1) (Danio rerio (Zebrafish)).